The primary structure comprises 214 residues: Chalcone isomerase-like protein 1 (214 aa).

Belongs to the chalcone isomerase family. Mostly expressed in glandular trichomes (lupulin glands), and, to a lower extent, in cones, cones bracts, leaves, stems and roots.

It localises to the cytoplasm. It carries out the reaction a chalcone = a flavanone.. It participates in secondary metabolite biosynthesis; flavonoid biosynthesis. Involved in the biosynthesis of prenylated phenolics natural products which contribute to the bitter taste of beer and display broad biological activities. Involved in anthocyanin biosynthesis. Polyketide binding proteins (PBP) which reduces the catalytic activities of CHS_H1 and PT1L and prevents demethylxanthohumol (DMX) production, by binding to DMX and naringenin chalcone (NC) to stabilize the chalconoids ring-opened structure. This is Chalcone isomerase-like protein 1 from Humulus lupulus (European hop).